A 275-amino-acid polypeptide reads, in one-letter code: 2,3,4,5-tetrahydropyridine-2,6-dicarboxylate N-succinyltransferase (275 aa).

Substrate is bound by residues R104 and D141.

This sequence belongs to the transferase hexapeptide repeat family. As to quaternary structure, homotrimer.

It is found in the cytoplasm. The enzyme catalyses (S)-2,3,4,5-tetrahydrodipicolinate + succinyl-CoA + H2O = (S)-2-succinylamino-6-oxoheptanedioate + CoA. The protein operates within amino-acid biosynthesis; L-lysine biosynthesis via DAP pathway; LL-2,6-diaminopimelate from (S)-tetrahydrodipicolinate (succinylase route): step 1/3. In Mannheimia succiniciproducens (strain KCTC 0769BP / MBEL55E), this protein is 2,3,4,5-tetrahydropyridine-2,6-dicarboxylate N-succinyltransferase.